We begin with the raw amino-acid sequence, 628 residues long: tRNA uridine 5-carboxymethylaminomethyl modification enzyme MnmG 1 (628 aa).

FAD is bound at residue 11 to 16; the sequence is GAGHAG. 280-294 lines the NAD(+) pocket; sequence GPRHCPSIDRKVLNF.

It belongs to the MnmG family. In terms of assembly, homodimer. Heterotetramer of two MnmE and two MnmG subunits. FAD serves as cofactor.

It is found in the cytoplasm. Functionally, NAD-binding protein involved in the addition of a carboxymethylaminomethyl (cmnm) group at the wobble position (U34) of certain tRNAs, forming tRNA-cmnm(5)s(2)U34. The polypeptide is tRNA uridine 5-carboxymethylaminomethyl modification enzyme MnmG 1 (Fusobacterium nucleatum subsp. nucleatum (strain ATCC 25586 / DSM 15643 / BCRC 10681 / CIP 101130 / JCM 8532 / KCTC 2640 / LMG 13131 / VPI 4355)).